A 416-amino-acid polypeptide reads, in one-letter code: 3-phosphoshikimate 1-carboxyvinyltransferase (416 aa).

Residues Lys20, Ser21, and Arg25 each contribute to the 3-phosphoshikimate site. Lys20 is a phosphoenolpyruvate binding site. Phosphoenolpyruvate is bound by residues Gly88 and Arg116. Positions 159, 160, 161, 186, 300, and 327 each coordinate 3-phosphoshikimate. Gln161 serves as a coordination point for phosphoenolpyruvate. Catalysis depends on Asp300, which acts as the Proton acceptor. Residues Arg331 and Arg373 each coordinate phosphoenolpyruvate.

Belongs to the EPSP synthase family. As to quaternary structure, monomer.

Its subcellular location is the cytoplasm. It carries out the reaction 3-phosphoshikimate + phosphoenolpyruvate = 5-O-(1-carboxyvinyl)-3-phosphoshikimate + phosphate. The protein operates within metabolic intermediate biosynthesis; chorismate biosynthesis. Its function is as follows. Catalyzes the transfer of the enolpyruvyl moiety of phosphoenolpyruvate (PEP) to the 5-hydroxyl of shikimate-3-phosphate (S3P) to produce enolpyruvyl shikimate-3-phosphate and inorganic phosphate. The protein is 3-phosphoshikimate 1-carboxyvinyltransferase of Archaeoglobus fulgidus (strain ATCC 49558 / DSM 4304 / JCM 9628 / NBRC 100126 / VC-16).